The chain runs to 633 residues: Extracellular metalloproteinase 5 (633 aa).

A signal peptide spans 1 to 21; that stretch reads MHGLLLAAAGLLSLPLHVVAH. The propeptide occupies 22–245; it reads PQPSTSLAGR…HNVVDYVSHA (224 aa). N285 is a glycosylation site (N-linked (GlcNAc...) asparagine). H428 is a binding site for Zn(2+). The active site involves E429. H432 serves as a coordination point for Zn(2+). N-linked (GlcNAc...) asparagine glycans are attached at residues N592 and N621.

Belongs to the peptidase M36 family. Zn(2+) serves as cofactor.

It is found in the secreted. Secreted metalloproteinase probably acting as a virulence factor. The sequence is that of Extracellular metalloproteinase 5 (MEP5) from Trichophyton rubrum (Athlete's foot fungus).